We begin with the raw amino-acid sequence, 150 residues long: 1,4-dihydroxy-2-naphthoyl-CoA hydrolase (150 aa).

Residue aspartate 19 is part of the active site.

It belongs to the 4-hydroxybenzoyl-CoA thioesterase family. DHNA-CoA hydrolase subfamily.

It catalyses the reaction 1,4-dihydroxy-2-naphthoyl-CoA + H2O = 1,4-dihydroxy-2-naphthoate + CoA + H(+). It functions in the pathway cofactor biosynthesis; phylloquinone biosynthesis. The protein operates within quinol/quinone metabolism; 1,4-dihydroxy-2-naphthoate biosynthesis; 1,4-dihydroxy-2-naphthoate from chorismate: step 7/7. Catalyzes the hydrolysis of 1,4-dihydroxy-2-naphthoyl-CoA (DHNA-CoA) to 1,4-dihydroxy-2-naphthoate (DHNA), a reaction involved in phylloquinone (vitamin K1) biosynthesis. The polypeptide is 1,4-dihydroxy-2-naphthoyl-CoA hydrolase (Prochlorococcus marinus (strain MIT 9215)).